The following is a 1467-amino-acid chain: MLRDELLRSKNDEIARCLLSRKRKLSELYFATVGFAGATENAPTNALYHQKEQTFLDANDLTKGRYFNEATLPPFPDFAALIPRPEEQHSSLEITEPVVQTDDVSSVIAPKAEGAVRGIAPSFQQQEGQTAQVIEQRLVEDSLKKDDARIHQQPALATTSEIPQVANSPTTPAQPDQLPQKASFAVPDTPPTSTSHESVDASVSPALKGLPPSEVAPPRAVSNQLPSAQRKPESRPSLVLAQPSEDQPLSPASSAGPYSNNTPAPVAVSPDTSPAEEVTEGADEVALSPKRVGPVQLQPGLVPSTPDEQLQLEAAQSLQQNALASKSIGDVTTASSLSNEVIKEDVGPTPSAAADSSKETQDQTSTSVEAPEPKRPDGVVVAPEESQPPAQSIQEETQSQVGAEVKVVASTTPAGKKPTAAAVLPAQPERMTTRVSSGAIRHKSVSEILGETPKPSAVQPEKAHAIEKPADMVRAPASASPESAAKMRLKDRKAREKERSKLSTVVFPKQQQQQQQQQEKDDSLDIVRQYAGELARLNEEQDYLFTLFQNKAYAPPRGTNLSTLLASAHKTLTTSNHLLEYQEQMDCRTLRRIYALQNANRWPLRQLKRSVEPPRQGTHWDVLLDHMKWMRTDYREERKWKIAAAKSCADWCAEYVNSDPEHRALLRVPCRIPSKFEKKEAHASSMISPPEETTEEMLVVSQPTPDLIPSAEDESVSDGFNDEIRHDIRDTVAPAAIFSLGSDEFTFSLDMTPAAQKLLDELPIYTPVKIAPGANVPMFEQPPDSAWKTELLPVSKYASGRIKFHETESPRKRSRYDYSQYDSNPEHGMLDLPPEQTNVALFRPENKPIRDRIHPGHSFRPPTEYPMPSVGFFESRQSSQWTYAEDDELRRLVKEYSYNWSLISSCLTPSSQFTSGAERRTPWECFERWVGLEGLPADMSKTQYFRAYHQRIETAQRTVLAQQQAAQQQQQQQQQQQQQGGNNSGQAQPPIRRRTTQPVRVDRRRSSKHLALLDAMRKLAKKRETMLQKQQHASHLASLRKVNDANQPKPPISSPAEFSRLKYDRELKLQERQEQYRQQMIAQQRANLAAQRAGQIPSQQPMMNAPPGRTPNGIPHNPGTPGIPGATPNGMHNGMPNALPNGIPPGMGVSQGRPHMQGVPAGGPPMNGPIPPNPMAMKMMPQTGMPQGPGGRPGMPMQTSPDNTRVMREANRLQEQQRILQSRQQQPQPPQHQQPQAQQAQQQFHNQQQFGPQGSHSPNMNLPNVNGTPNNPAMMAAIQAGSGMQSPSLHNAMPQGVSTPSPRMGQPNLLSGGVVPTISSIQSQIQRSNPNMPPEQVNKLATDRLHQYQQQRMSQVAMNAAAGNMASVQANYQVPHDGNFQSPQPGMNGTPGMQVPQSQGFSPMMRVPQPAQQNRMGVGNSPAMNVALPQQSRSATPQTQRSGSAQAGPVPGSSKSPHPPQAQIPSG.

Disordered regions lie at residues 154–314, 329–402, and 469–522; these read PALA…QLEA, GDVT…SQVG, and PADM…EKDD. 4 stretches are compositionally biased toward polar residues: residues 155 to 174, 244 to 263, 330 to 339, and 388 to 401; these read ALAT…TPAQ, SEDQ…NNTP, DVTTASSLSN, and PPAQ…QSQV. A compositionally biased stretch (low complexity) spans 475-484; it reads APASASPESA. The region spanning 607 to 686 is the HSA domain; it reads LKRSVEPPRQ…EKKEAHASSM (80 aa). The region spanning 877-935 is the Myb-like domain; it reads QSSQWTYAEDDELRRLVKEYSYNWSLISSCLTPSSQFTSGAERRTPWECFERWVGLEGL. Low complexity predominate over residues 970–979; that stretch reads QQQQQQQQQQ. Disordered stretches follow at residues 970 to 1058, 1113 to 1202, 1216 to 1307, and 1377 to 1467; these read QQQQ…PAEF, GIPH…TSPD, QQRI…MGQP, and DGNF…IPSG. The segment covering 1162-1174 has biased composition (pro residues); the sequence is GGPPMNGPIPPNP. 3 stretches are compositionally biased toward low complexity: residues 1175–1186, 1216–1226, and 1233–1253; these read MAMKMMPQTGMP, QQRILQSRQQQ, and QQPQ…FGPQ. Polar residues-rich tracts occupy residues 1254–1271 and 1428–1445; these read GSHS…TPNN and LPQQ…SGSA. The span at 1457 to 1467 shows a compositional bias: pro residues; the sequence is PHPPQAQIPSG.

It belongs to the EAF1 family. As to quaternary structure, component of the NuA4 histone acetyltransferase complex.

The protein localises to the nucleus. Functionally, component of the NuA4 histone acetyltransferase complex which is involved in transcriptional activation of selected genes principally by acetylation of nucleosomal histone H4 and H2A. The NuA4 complex is also involved in DNA repair. In Aspergillus fumigatus (strain ATCC MYA-4609 / CBS 101355 / FGSC A1100 / Af293) (Neosartorya fumigata), this protein is Chromatin modification-related protein eaf1 (eaf1).